Consider the following 427-residue polypeptide: Serine--tRNA ligase (427 aa).

236-238 (TAE) contacts L-serine. 267–269 (RRE) contacts ATP. E290 is a binding site for L-serine. ATP is bound at residue 354-357 (EISS). S390 is a binding site for L-serine.

It belongs to the class-II aminoacyl-tRNA synthetase family. Type-1 seryl-tRNA synthetase subfamily. Homodimer. The tRNA molecule binds across the dimer.

The protein resides in the cytoplasm. It carries out the reaction tRNA(Ser) + L-serine + ATP = L-seryl-tRNA(Ser) + AMP + diphosphate + H(+). The enzyme catalyses tRNA(Sec) + L-serine + ATP = L-seryl-tRNA(Sec) + AMP + diphosphate + H(+). It participates in aminoacyl-tRNA biosynthesis; selenocysteinyl-tRNA(Sec) biosynthesis; L-seryl-tRNA(Sec) from L-serine and tRNA(Sec): step 1/1. Functionally, catalyzes the attachment of serine to tRNA(Ser). Is also able to aminoacylate tRNA(Sec) with serine, to form the misacylated tRNA L-seryl-tRNA(Sec), which will be further converted into selenocysteinyl-tRNA(Sec). In Rippkaea orientalis (strain PCC 8801 / RF-1) (Cyanothece sp. (strain PCC 8801)), this protein is Serine--tRNA ligase.